The following is a 340-amino-acid chain: Photosystem II protein D1 (340 aa).

The next 3 membrane-spanning stretches (helical) occupy residues 25 to 42 (YIGW…LATV), 114 to 129 (HFFL…EWEF), and 138 to 152 (WIFV…AAAA). Chlorophyll a is bound at residue His-114. Position 122 (Trp-122) interacts with pheophytin a. [CaMn4O5] cluster-binding residues include Asp-166 and Glu-185. Residues 193-214 (FHILGVAGVFGGSLFSAMHGSL) form a helical membrane-spanning segment. Residue His-194 participates in chlorophyll a binding. Residues His-211 and 260-261 (SF) contribute to the a quinone site. A Fe cation-binding site is contributed by His-211. His-268 lines the Fe cation pocket. The helical transmembrane segment at 270–284 (FLAAWPVIGIWITSL) threads the bilayer. Positions 328, 329, 338, and 340 each coordinate [CaMn4O5] cluster.

This sequence belongs to the reaction center PufL/M/PsbA/D family. As to quaternary structure, PSII is composed of 1 copy each of membrane proteins PsbA, PsbB, PsbC, PsbD, PsbE, PsbF, PsbH, PsbI, PsbJ, PsbK, PsbL, PsbM, PsbT, PsbX, PsbY, PsbZ, Psb30/Ycf12, at least 3 peripheral proteins of the oxygen-evolving complex and a large number of cofactors. It forms dimeric complexes. The D1/D2 heterodimer binds P680, chlorophylls that are the primary electron donor of PSII, and subsequent electron acceptors. It shares a non-heme iron and each subunit binds pheophytin, quinone, additional chlorophylls, carotenoids and lipids. D1 provides most of the ligands for the Mn4-Ca-O5 cluster of the oxygen-evolving complex (OEC). There is also a Cl(-1) ion associated with D1 and D2, which is required for oxygen evolution. The PSII complex binds additional chlorophylls, carotenoids and specific lipids. serves as cofactor. Post-translationally, tyr-157 forms a radical intermediate that is referred to as redox-active TyrZ, YZ or Y-Z.

The protein resides in the plastid. The protein localises to the chloroplast thylakoid membrane. It catalyses the reaction 2 a plastoquinone + 4 hnu + 2 H2O = 2 a plastoquinol + O2. In terms of biological role, photosystem II (PSII) is a light-driven water:plastoquinone oxidoreductase that uses light energy to abstract electrons from H(2)O, generating O(2) and a proton gradient subsequently used for ATP formation. It consists of a core antenna complex that captures photons, and an electron transfer chain that converts photonic excitation into a charge separation. The D1/D2 (PsbA/PsbD) reaction center heterodimer binds P680, the primary electron donor of PSII as well as several subsequent electron acceptors. In Amphidinium carterae (Dinoflagellate), this protein is Photosystem II protein D1.